Consider the following 147-residue polypeptide: Large-conductance mechanosensitive channel (147 aa).

The next 2 helical transmembrane spans lie at 8-28 (FIMK…AAFG) and 81-101 (GIFL…FMII).

Belongs to the MscL family. As to quaternary structure, homopentamer.

The protein resides in the cell inner membrane. Channel that opens in response to stretch forces in the membrane lipid bilayer. May participate in the regulation of osmotic pressure changes within the cell. The polypeptide is Large-conductance mechanosensitive channel (Trichlorobacter lovleyi (strain ATCC BAA-1151 / DSM 17278 / SZ) (Geobacter lovleyi)).